A 66-amino-acid chain; its full sequence is Beta-toxin Cb3 (66 aa).

The 66-residue stretch at 1 to 66 (KEGYIVNYYD…VWPLPNKTCL (66 aa)) folds into the LCN-type CS-alpha/beta domain. Disulfide bonds link C12/C65, C16/C41, C25/C46, and C29/C48.

Belongs to the long (4 C-C) scorpion toxin superfamily. Sodium channel inhibitor family. Beta subfamily. As to expression, expressed by the venom gland.

The protein localises to the secreted. Functionally, beta toxins bind voltage-independently at site-4 of sodium channels (Nav) and reduces peak current and shifts the voltage of activation toward more negative potentials thereby affecting sodium channel activation and promoting spontaneous and repetitive firing. Has an inhibitory effect on voltage-gated sodium channels hNav1.1/SCN1A, hNav1.2/SCN2A, hNav1.4/SCN4A and hNav1.6/SCN8A. Reduces the peak current of hNav1.5/SCN5A but does not shift its voltage of activation. Also affects the inactivation processes of hNav1.1/SCN1A, hNav1.4/SCN4A, hNav1.5/SCN5A and hNav1.6/SCN8A. This toxin is active against mammals and lethal to mice. This chain is Beta-toxin Cb3, found in Centruroides baergi (Scorpion).